The sequence spans 238 residues: Ribitol-5-phosphate cytidylyltransferase 2 (238 aa).

CTP contacts are provided by residues 7–10 (LAGG) and 81–87 (GTDRNET).

The protein belongs to the IspD/TarI cytidylyltransferase family. TarI subfamily.

The enzyme catalyses D-ribitol 5-phosphate + CTP + H(+) = CDP-L-ribitol + diphosphate. The protein operates within cell wall biogenesis; poly(ribitol phosphate) teichoic acid biosynthesis. Its function is as follows. Catalyzes the transfer of the cytidylyl group of CTP to D-ribitol 5-phosphate. This is Ribitol-5-phosphate cytidylyltransferase 2 from Staphylococcus aureus (strain MRSA252).